A 173-amino-acid polypeptide reads, in one-letter code: Telomerase RNA component interacting RNase (173 aa).

Basic and acidic residues predominate over residues 1-12 (MAARGRRAEPPG). The segment at 1 to 119 (MAARGRRAEP…LSFVGKRRGG (119 aa)) is disordered. Low complexity-rich tracts occupy residues 14 to 23 (EAPGPAGSGR) and 43 to 52 (SGSSPVSSGV). Basic and acidic residues predominate over residues 64–79 (LFKRKMEEEQRQRQEE). Residues 80–90 (PPPGPQRPDPP) show a composition bias toward pro residues. An N6-acetyllysine modification is found at K143.

In terms of assembly, part of the telomerase RNA 3' end complex which contains about 488 proteins.

Exoribonuclease that is part of the telomerase RNA 3' end processing complex and which has the ability to cleave all four unpaired RNA nucleotides from the 5' end or 3' end with higher efficiency for purine bases. The protein is Telomerase RNA component interacting RNase of Mus musculus (Mouse).